Here is a 264-residue protein sequence, read N- to C-terminus: Indole-3-glycerol phosphate synthase (264 aa).

The protein belongs to the TrpC family.

It carries out the reaction 1-(2-carboxyphenylamino)-1-deoxy-D-ribulose 5-phosphate + H(+) = (1S,2R)-1-C-(indol-3-yl)glycerol 3-phosphate + CO2 + H2O. The protein operates within amino-acid biosynthesis; L-tryptophan biosynthesis; L-tryptophan from chorismate: step 4/5. In Albidiferax ferrireducens (strain ATCC BAA-621 / DSM 15236 / T118) (Rhodoferax ferrireducens), this protein is Indole-3-glycerol phosphate synthase.